The primary structure comprises 286 residues: NADPH-dependent 7-cyano-7-deazaguanine reductase (286 aa).

A substrate-binding site is contributed by 92-94 (IES). An NADPH-binding site is contributed by 94–95 (SK). Catalysis depends on cysteine 194, which acts as the Thioimide intermediate. Aspartate 201 functions as the Proton donor in the catalytic mechanism. 233–234 (HE) contributes to the substrate binding site. NADPH is bound at residue 262 to 263 (RG).

It belongs to the GTP cyclohydrolase I family. QueF type 2 subfamily. In terms of assembly, homodimer.

The protein localises to the cytoplasm. It catalyses the reaction 7-aminomethyl-7-carbaguanine + 2 NADP(+) = 7-cyano-7-deazaguanine + 2 NADPH + 3 H(+). The protein operates within tRNA modification; tRNA-queuosine biosynthesis. Functionally, catalyzes the NADPH-dependent reduction of 7-cyano-7-deazaguanine (preQ0) to 7-aminomethyl-7-deazaguanine (preQ1). This Shewanella oneidensis (strain ATCC 700550 / JCM 31522 / CIP 106686 / LMG 19005 / NCIMB 14063 / MR-1) protein is NADPH-dependent 7-cyano-7-deazaguanine reductase.